The primary structure comprises 85 residues: UPF0291 protein SSA_1878 (85 aa).

The disordered stretch occupies residues 58 to 85 (GNDVTPEKLRQVQREKGLHGRSLDDPES). A compositionally biased stretch (basic and acidic residues) spans 62–85 (TPEKLRQVQREKGLHGRSLDDPES).

The protein belongs to the UPF0291 family.

The protein localises to the cytoplasm. The chain is UPF0291 protein SSA_1878 from Streptococcus sanguinis (strain SK36).